A 209-amino-acid chain; its full sequence is Putative 3-methyladenine DNA glycosylase (209 aa).

The segment at 189–209 (YISKTQPGPPPKKRKKGLESS) is disordered. Residues 199-209 (PKKRKKGLESS) are compositionally biased toward basic residues.

Belongs to the DNA glycosylase MPG family.

The chain is Putative 3-methyladenine DNA glycosylase from Chlorobaculum tepidum (strain ATCC 49652 / DSM 12025 / NBRC 103806 / TLS) (Chlorobium tepidum).